The chain runs to 235 residues: Serine protease SplA (235 aa).

The N-terminal stretch at 1-35 is a signal peptide; the sequence is MNKNVMVKGLTALTILTSLGFAENISNQPHSIAKA. Catalysis depends on charge relay system residues H74, D113, and S189.

Belongs to the peptidase S1B family.

It localises to the secreted. The sequence is that of Serine protease SplA (splA) from Staphylococcus aureus (strain USA300).